The following is a 143-amino-acid chain: Large ribosomal subunit protein uL11 (143 aa).

Belongs to the universal ribosomal protein uL11 family. Part of the ribosomal stalk of the 50S ribosomal subunit. Interacts with L10 and the large rRNA to form the base of the stalk. L10 forms an elongated spine to which L12 dimers bind in a sequential fashion forming a multimeric L10(L12)X complex. One or more lysine residues are methylated.

Its function is as follows. Forms part of the ribosomal stalk which helps the ribosome interact with GTP-bound translation factors. This is Large ribosomal subunit protein uL11 from Chromohalobacter salexigens (strain ATCC BAA-138 / DSM 3043 / CIP 106854 / NCIMB 13768 / 1H11).